The following is a 362-amino-acid chain: Atypical chemokine receptor 3 (362 aa).

Residues 1–47 lie on the Extracellular side of the membrane; the sequence is MDVHLFDYAEPGNYSDINWPCNSSDCIVVDTVQCPTMPNKNVLLYTL. N-linked (GlcNAc...) asparagine glycosylation is found at asparagine 13 and asparagine 22. Residues 48 to 68 form a helical membrane-spanning segment; it reads SFIYIFIFVIGMIANSVVVWV. The Cytoplasmic portion of the chain corresponds to 69 to 81; that stretch reads NIQAKTTGYDTHC. The chain crosses the membrane as a helical span at residues 82–102; it reads YILNLAIADLWVVITIPVWVV. The Extracellular portion of the chain corresponds to 103–118; it reads SLVQHNQWPMGELTCK. A disulfide bond links cysteine 117 and cysteine 196. Residues 119-139 traverse the membrane as a helical segment; sequence ITHLIFSINLFGSIFFLACMS. Topologically, residues 140-162 are cytoplasmic; the sequence is VDRYLSITYFTGTSSYKKKMVRR. Residues 163 to 183 form a helical membrane-spanning segment; the sequence is VVCILVWLLAFFVSLPDTYYL. Topologically, residues 184 to 213 are extracellular; that stretch reads KTVTSASNNETYCRSFYPEHSIKEWLIGME. A helical transmembrane segment spans residues 214 to 234; that stretch reads LVSVILGFAVPFTIIAIFYFL. Residues 235–252 lie on the Cytoplasmic side of the membrane; it reads LARAMSASGDQEKHSSRK. The helical transmembrane segment at 253–273 threads the bilayer; it reads IIFSYVVVFLVCWLPYHFVVL. Residues 274–296 are Extracellular-facing; that stretch reads LDIFSILHYIPFTCQLENVLFTA. The helical transmembrane segment at 297–319 threads the bilayer; it reads LHVTQCLSLVHCCVNPVLYSFIN. Residues 320-362 lie on the Cytoplasmic side of the membrane; it reads RNYRYELMKAFIFKYSAKTGLTKLIDASRVSETEYSALEQNTK. Residues 324–362 form a C-terminal cytoplasmic tail region; sequence YELMKAFIFKYSAKTGLTKLIDASRVSETEYSALEQNTK. Phosphoserine is present on residues serine 347, serine 350, and serine 355.

It belongs to the G-protein coupled receptor 1 family. Atypical chemokine receptor subfamily. Homodimer. Can form heterodimers with CXCR4; heterodimerization may regulate CXCR4 signaling activity. Interacts with ARRB1 and ARRB2. In terms of processing, the Ser/Thr residues in the C-terminal cytoplasmic tail may be phosphorylated. Ubiquitinated at the Lys residues in its C-terminal cytoplasmic tail and is essential for correct trafficking from and to the cell membrane. Deubiquitinated by CXCL12-stimulation in a reversible manner. In terms of tissue distribution, not detected in blood, liver, lung and heart, but high expression detected in several tumor cell lines (at protein level). Expressed in heart, spleen, kidney, lung, ovary, brain, testis, astrocytes, neutrophils and B-lymphocytes.

The protein resides in the cell membrane. It localises to the early endosome. It is found in the recycling endosome. Its function is as follows. Atypical chemokine receptor that controls chemokine levels and localization via high-affinity chemokine binding that is uncoupled from classic ligand-driven signal transduction cascades, resulting instead in chemokine sequestration, degradation, or transcytosis. Also known as interceptor (internalizing receptor) or chemokine-scavenging receptor or chemokine decoy receptor. Acts as a receptor for chemokines CXCL11 and CXCL12/SDF1. Chemokine binding does not activate G-protein-mediated signal transduction but instead induces beta-arrestin recruitment, leading to ligand internalization and activation of MAPK signaling pathway. Required for regulation of CXCR4 protein levels in migrating interneurons, thereby adapting their chemokine responsiveness. In glioma cells, transduces signals via MEK/ERK pathway, mediating resistance to apoptosis. Promotes cell growth and survival. Not involved in cell migration, adhesion or proliferation of normal hematopoietic progenitors but activated by CXCL11 in malignant hemapoietic cells, leading to phosphorylation of ERK1/2 (MAPK3/MAPK1) and enhanced cell adhesion and migration. Plays a regulatory role in CXCR4-mediated activation of cell surface integrins by CXCL12. Required for heart valve development. Regulates axon guidance in the oculomotor system through the regulation of CXCL12 levels. This Mus musculus (Mouse) protein is Atypical chemokine receptor 3.